The following is a 327-amino-acid chain: Phenylalanine--tRNA ligase alpha subunit (327 aa).

Glu-252 is a Mg(2+) binding site.

This sequence belongs to the class-II aminoacyl-tRNA synthetase family. Phe-tRNA synthetase alpha subunit type 1 subfamily. As to quaternary structure, tetramer of two alpha and two beta subunits. Requires Mg(2+) as cofactor.

It is found in the cytoplasm. The enzyme catalyses tRNA(Phe) + L-phenylalanine + ATP = L-phenylalanyl-tRNA(Phe) + AMP + diphosphate + H(+). The protein is Phenylalanine--tRNA ligase alpha subunit of Shewanella amazonensis (strain ATCC BAA-1098 / SB2B).